A 309-amino-acid polypeptide reads, in one-letter code: MLNNQQIHQSVLINEVIHNLNINPCGNYLDLTAGFAGHSQKILEKLTTGTLTINDVDKESINFCQKLFFKNNNVVIIHDNFANFPVHLKQLSITKFDGILMDLGVSSHQLNQPNRGFSFKNDGPIDMRMDQSNQKNTALTVLKNLTEQKLSLILKKYGDIKHPKPIAIGLKKAVQTEKNLTTTQLAKVVKECATGFEKYQSRNYLAKVFQAIRIYLNDEITNLKTALTFIPNLLKNNSRFLVIVFHSIEEKIVRNFIAKLTSFIQPEALPIKLTPAYQLITKKPILPSQKELELNPRSRSAKLFVIQKN.

S-adenosyl-L-methionine-binding positions include 36–38 (AGH), aspartate 55, phenylalanine 81, aspartate 102, and glutamine 109.

Belongs to the methyltransferase superfamily. RsmH family.

The protein localises to the cytoplasm. The catalysed reaction is cytidine(1402) in 16S rRNA + S-adenosyl-L-methionine = N(4)-methylcytidine(1402) in 16S rRNA + S-adenosyl-L-homocysteine + H(+). Specifically methylates the N4 position of cytidine in position 1402 (C1402) of 16S rRNA. This chain is Ribosomal RNA small subunit methyltransferase H, found in Mycoplasma genitalium (strain ATCC 33530 / DSM 19775 / NCTC 10195 / G37) (Mycoplasmoides genitalium).